The following is a 238-amino-acid chain: Small ribosomal subunit protein uS2 (238 aa).

Belongs to the universal ribosomal protein uS2 family.

The chain is Small ribosomal subunit protein uS2 from Prochlorococcus marinus (strain SARG / CCMP1375 / SS120).